The following is an 834-amino-acid chain: ATP-dependent DNA helicase fml1 (834 aa).

The region spanning 80–248 (IVQKALFENV…NVIDSLHISR (169 aa)) is the Helicase ATP-binding domain. 93 to 100 (LPTGLGKT) lines the ATP pocket. The short motif at 196 to 199 (DEAH) is the DEAH box element. Residues 416 to 582 (HLERIVTEYF…GLSLSEKSYR (167 aa)) form the Helicase C-terminal domain. The interaction with MHF complex stretch occupies residues 650-690 (EESPFEICPVTYSIEQEKKLEKYKRVCLRGLDIHRNRRLSQ). Residues 738–769 (NSTDRDTKQPKMHDFRQPLHPNPMTTLKRKGQ) are disordered. Residues 740-754 (TDRDTKQPKMHDFRQ) are compositionally biased toward basic and acidic residues.

It belongs to the DEAD box helicase family. DEAH subfamily. FANCM sub-subfamily.

It localises to the cytoplasm. Its subcellular location is the nucleus. The protein localises to the nucleolus. The enzyme catalyses ATP + H2O = ADP + phosphate + H(+). Functionally, ATP-dependent DNA helicase involved in DNA damage repair by homologous recombination and in genome maintenance. Capable of unwinding D-loops. Plays a role in limiting crossover recombination during mitotic DNA double-strand break (DSB) repair. Component of a FANCM-MHF complex which promotes gene conversion at blocked replication forks, probably by reversal of the stalled fork. FANCM-MHF also promotes non-crossover recombination in meiotic cells. This is ATP-dependent DNA helicase fml1 from Schizosaccharomyces pombe (strain 972 / ATCC 24843) (Fission yeast).